Here is a 222-residue protein sequence, read N- to C-terminus: Charged multivesicular body protein 3 (222 aa).

Glycine 2 carries the N-myristoyl glycine lipid modification. Residues 2–113 are intramolecular interaction with C-terminus; it reads GLFGKTQEKP…LQKSTEVMKA (112 aa). Positions 22-54 form a coiled coil; that stretch reads KIRKEMRVVDRQIRDIQREEEKVKRSVKDAAKK. 2 important for autoinhibitory function regions span residues 59–64 and 168–169; these read VCVVLA and IL. Residues 149-222 adopt a coiled-coil conformation; the sequence is ESMDDQEEME…MQSRLATLRS (74 aa). The interval 151–220 is intramolecular interaction with N-terminus; the sequence is MDDQEEMEEA…EAMQSRLATL (70 aa). The segment at 151–222 is interaction with VPS4A; sequence MDDQEEMEEA…MQSRLATLRS (72 aa). A Glycyl lysine isopeptide (Lys-Gly) (interchain with G-Cter in ubiquitin) cross-link involves residue lysine 179. Residues 180–222 form a disordered region; it reads APSKVTDALPEPEPLGAMAASEDEEEEEEALEAMQSRLATLRS. Interaction with STAMBP regions lie at residues 196-222, 203-207, and 221-222; these read AMAASEDEEEEEEALEAMQSRLATLRS, EEEEE, and RS. A Phosphoserine modification is found at serine 200. A compositionally biased stretch (acidic residues) spans 200-210; sequence SEDEEEEEEAL. The short motif at 201–211 is the MIT-interacting motif element; the sequence is EDEEEEEEALE.

It belongs to the SNF7 family. Probable core component of the endosomal sorting required for transport complex III (ESCRT-III). ESCRT-III components are thought to multimerize to form a flat lattice on the perimeter membrane of the endosome. Several assembly forms of ESCRT-III may exist that interact and act sequentially. Forms a metastable monomer in solution; its core structure (without part of the putative autoinhibitory C-terminal acidic region) oligomerizes into a flat lattice via two different dimerization interfaces. In vitro, heteromerizes with CHMP2A (but not CHMP4) to form helical tubular structures that expose membrane-interacting sites on the outside whereas VPS4B can associate on the inside of the tubule. May interact with IGFBP7; the relevance of such interaction however remains unclear. Interacts with CHMP2A. Interacts with CHMP4A; the interaction requires the release of CHMP4A autoinhibition. Interacts with VPS4A. Interacts with STAMBP; the interaction appears to relieve the autoinhibition of CHMP3. Interacts with VTA1.

The protein resides in the cytoplasm. Its subcellular location is the cytosol. It is found in the membrane. The protein localises to the endosome. It localises to the late endosome membrane. Functionally, probable core component of the endosomal sorting required for transport complex III (ESCRT-III) which is involved in multivesicular bodies (MVBs) formation and sorting of endosomal cargo proteins into MVBs. MVBs contain intraluminal vesicles (ILVs) that are generated by invagination and scission from the limiting membrane of the endosome and mostly are delivered to lysosomes enabling degradation of membrane proteins, such as stimulated growth factor receptors, lysosomal enzymes and lipids. The MVB pathway appears to require the sequential function of ESCRT-O, -I,-II and -III complexes. ESCRT-III proteins mostly dissociate from the invaginating membrane before the ILV is released. The ESCRT machinery also functions in topologically equivalent membrane fission events, such as the terminal stages of cytokinesis and the budding of enveloped viruses (lentiviruses). ESCRT-III proteins are believed to mediate the necessary vesicle extrusion and/or membrane fission activities, possibly in conjunction with the AAA ATPase VPS4. Selectively binds to phosphatidylinositol 3,5-bisphosphate PtdIns(3,5)P2 and PtdIns(3,4)P2 in preference to other phosphoinositides tested. Involved in late stages of cytokinesis. Plays a role in endosomal sorting/trafficking of EGF receptor. This chain is Charged multivesicular body protein 3 (CHMP3), found in Bos taurus (Bovine).